The sequence spans 610 residues: T-cell immunomodulatory protein (610 aa).

The N-terminal stretch at 1-32 is a signal peptide; that stretch reads MAAGLLPSARAVLALLFLGLALLSVGPAPAQA. N-linked (GlcNAc...) asparagine glycosylation is found at Asn-35, Asn-94, Asn-123, Asn-138, Asn-145, Asn-150, Asn-175, and Asn-241. Residues 98-135 form an FG-GAP 1; atypical repeat; it reads LVTSVVPGDYDGDSQMDVLLTYFPQNHSNNELGAVIFW. An FG-GAP 2; atypical repeat occupies 153 to 183; sequence FHDQPLIMDFNGDLIPDVFAITNESSQPQIL. One copy of the FG-GAP 3; atypical repeat lies at 256-291; the sequence is VVGQSAFADFDGDGHMDHLLPGCEDKDCQKSAIYLM. Asn-351, Asn-369, and Asn-480 each carry an N-linked (GlcNAc...) asparagine glycan. Residues 564 to 584 form a helical membrane-spanning segment; sequence IVLLTAVALTGVCVFILAIIA.

Belongs to the TIP family. In terms of assembly, interacts with RUVBL1, RUVBL2 and alpha-tubulin.

It localises to the secreted. The protein resides in the cell membrane. Functionally, modulator of T-cell function. Has a protective effect in graft versus host disease model. The sequence is that of T-cell immunomodulatory protein from Rattus norvegicus (Rat).